We begin with the raw amino-acid sequence, 136 residues long: Pilotin AspS 2 (136 aa).

Residues 1 to 24 (MSIKQMPGRVLISLLLSVTGLLSG) form the signal peptide. Cys-25 carries N-palmitoyl cysteine lipidation. The S-diacylglycerol cysteine moiety is linked to residue Cys-25. Cys-94 and Cys-131 are disulfide-bonded.

Belongs to the GspS/AspS pilotin family. In terms of assembly, cryo-electron microscopy shows that the complex forms a cylindrical channel with 15 GspD2 subunits, each of which interacts with its surrounding AspS2 (GspS-beta).

The protein resides in the cell outer membrane. Its function is as follows. Part of a type II secretion system (T2SS, formerly general secretion pathway, GSP) for the export of folded proteins across the outer membrane. Required for correct assembly of the type II secretion system-beta (T2SS-beta), for localization of GspD-beta to the cell outer membrane and for export of a labile enterotoxin by T2SS-beta. Each AspS2 binds to 2 GspD2 subunits and may clamp the monomers together, stabilizing structure and accelerating its assembly. The polypeptide is Pilotin AspS 2 (Escherichia coli O78:H11 (strain H10407 / ETEC)).